Reading from the N-terminus, the 128-residue chain is Fatty acid binding protein 1-B.1 (128 aa).

Belongs to the calycin superfamily. Fatty-acid binding protein (FABP) family. Expressed in the yolk syncytial layer (YSL) and subsequently in the intestinal bulb in developing embryos and larvae. In adults, expressed in the intestine.

The protein resides in the cytoplasm. Its function is as follows. Binds free fatty acids and their coenzyme A derivatives, bilirubin, and some other small molecules in the cytoplasm. May be involved in intracellular lipid transport. The protein is Fatty acid binding protein 1-B.1 (fabp1b.1) of Danio rerio (Zebrafish).